Here is a 483-residue protein sequence, read N- to C-terminus: uncharacterized protein (483 aa).

This is an uncharacterized protein from Acanthamoeba polyphaga mimivirus (APMV).